The primary structure comprises 141 residues: Large ribosomal subunit protein mL42 (141 aa).

Residues 1 to 31 constitute a mitochondrion transit peptide; sequence MTAAVKWAVSHRTIWRHLFPIQNGAISSACH.

This sequence belongs to the mitochondrion-specific ribosomal protein mL42 family. Component of the mitochondrial ribosome large subunit (39S) which comprises a 16S rRNA and about 50 distinct proteins. Component of the mitochondrial ribosome small subunit (28S) which comprises a 12S rRNA and about 30 distinct proteins.

The protein resides in the mitochondrion. In Rattus norvegicus (Rat), this protein is Large ribosomal subunit protein mL42 (Mrpl42).